The sequence spans 889 residues: DNA mismatch repair protein MutS (889 aa).

622-629 (GPNMAGKS) serves as a coordination point for ATP. Residues 869–889 (QRVKRPEKAPADVTAETEDQE) are disordered.

Belongs to the DNA mismatch repair MutS family.

In terms of biological role, this protein is involved in the repair of mismatches in DNA. It is possible that it carries out the mismatch recognition step. This protein has a weak ATPase activity. This is DNA mismatch repair protein MutS from Desulfatibacillum aliphaticivorans.